A 116-amino-acid chain; its full sequence is Flagellar transcriptional regulator FlhD (116 aa).

The protein belongs to the FlhD family. In terms of assembly, homodimer; disulfide-linked. Forms a heterohexamer composed of two FlhC and four FlhD subunits. Each FlhC binds a FlhD dimer, forming a heterotrimer, and a hexamer assembles by dimerization of two heterotrimers.

Its subcellular location is the cytoplasm. In terms of biological role, functions in complex with FlhC as a master transcriptional regulator that regulates transcription of several flagellar and non-flagellar operons by binding to their promoter region. Activates expression of class 2 flagellar genes, including fliA, which is a flagellum-specific sigma factor that turns on the class 3 genes. Also regulates genes whose products function in a variety of physiological pathways. The sequence is that of Flagellar transcriptional regulator FlhD from Escherichia coli O9:H4 (strain HS).